The chain runs to 377 residues: uncharacterized protein (377 aa).

Residues 1-46 form a disordered region; the sequence is MLAGLRRRGSMTTPPGPEIPPPHQGGFYSAGHHPQRPWPETPPPKT. Composition is skewed to pro residues over residues 14-23 and 36-45; these read PPGPEIPPPH and RPWPETPPPK. Residues 53 to 73 traverse the membrane as a helical segment; sequence MLGAVALLAVVGVTVAVTLAV. The disordered stretch occupies residues 77-107; that stretch reads DKRDAIPPGSGVSGSPTASDIASADDSGPVS.

The protein resides in the cell inner membrane. May be involved in the ESX-1 / type VII specialized secretion system (T7SS), which exports several proteins including EsxA and EsxB. Involved in DNA conjugation in the recipient strain. This is an uncharacterized protein from Mycolicibacterium smegmatis (strain MKD8) (Mycobacterium smegmatis).